The chain runs to 1578 residues: BRD4-interacting chromatin-remodeling complex-associated protein (1578 aa).

Disordered regions lie at residues 80 to 101, 631 to 673, and 725 to 951; these read DILG…DQPC, PAVT…PSLA, and IVSA…PPPR. The span at 86–96 shows a compositional bias: gly residues; that stretch reads AAGGGGGGGGA. 2 stretches are compositionally biased toward low complexity: residues 631–662 and 764–782; these read PAVT…TQPQ and IPAA…PSLP. Composition is skewed to pro residues over residues 793–816, 824–841, and 865–888; these read MPSP…PPSQ, PSEP…PPTL, and PGPP…PASH. Residues 889–906 are compositionally biased toward low complexity; the sequence is LPPASTPSAVASSSEPSA. Ser929 carries the phosphoserine modification. Thr931 is subject to Phosphothreonine. Residues 942–951 show a composition bias toward pro residues; it reads PTAPPPPPPR. An N6-acetyllysine modification is found at Lys1067. The segment at 1206–1316 is disordered; it reads EKPDEYVSSS…NRPPIKTYEA (111 aa). Composition is skewed to low complexity over residues 1233–1247 and 1275–1294; these read SHGQ…GTSA and ASSS…AASS. A Glycyl lysine isopeptide (Lys-Gly) (interchain with G-Cter in SUMO2) cross-link involves residue Lys1327. 2 disordered regions span residues 1342–1435 and 1457–1578; these read DPVH…PTKV and VLKG…TLNR. Over residues 1346-1370 the composition is skewed to pro residues; it reads QPLPAPTPAKGAEPPPHPAPPPLPP. Ser1427 carries the phosphoserine modification. Polar residues predominate over residues 1502–1532; that stretch reads ASFSSDSPQDDTLTEHLQSAIDSILNLQQAP. The segment covering 1538–1553 has biased composition (pro residues); that stretch reads GPYPHTGPTPGTPTSP.

As to quaternary structure, component of the multiprotein chromatin-remodeling complexes SWI/SNF: SWI/SNF-A (BAF), SWI/SNF-B (PBAF) and related complexes. The canonical complex contains a catalytic subunit (either SMARCA4/BRG1/BAF190A or SMARCA2/BRM/BAF190B) and at least SMARCE1, ACTL6A/BAF53, SMARCC1/BAF155, SMARCC2/BAF170, and SMARCB1/SNF5/BAF47. Other subunits specific to each of the complexes may also be present permitting several possible combinations developmentally and tissue specific. Component of the SWI/SNF (GBAF) subcomplex, which includes at least BICRA or BICRAL (mutually exclusive), BRD9, SS18, the core BAF subunits, SMARCA2/BRM, SMARCA4/BRG1/BAF190A, ACTL6A/BAF53, SMARCC1/BAF155, and SMARCD1/BAF60A. Interacts with BRD4; the interaction bridges BRD4 to the GBAF complex.

It localises to the nucleus. In terms of biological role, component of SWI/SNF chromatin remodeling subcomplex GBAF that carries out key enzymatic activities, changing chromatin structure by altering DNA-histone contacts within a nucleosome in an ATP-dependent manner. May play a role in BRD4-mediated gene transcription. The polypeptide is BRD4-interacting chromatin-remodeling complex-associated protein (Mus musculus (Mouse)).